The chain runs to 95 residues: Aspartyl/glutamyl-tRNA(Asn/Gln) amidotransferase subunit C (95 aa).

The protein belongs to the GatC family. Heterotrimer of A, B and C subunits.

The catalysed reaction is L-glutamyl-tRNA(Gln) + L-glutamine + ATP + H2O = L-glutaminyl-tRNA(Gln) + L-glutamate + ADP + phosphate + H(+). It catalyses the reaction L-aspartyl-tRNA(Asn) + L-glutamine + ATP + H2O = L-asparaginyl-tRNA(Asn) + L-glutamate + ADP + phosphate + 2 H(+). In terms of biological role, allows the formation of correctly charged Asn-tRNA(Asn) or Gln-tRNA(Gln) through the transamidation of misacylated Asp-tRNA(Asn) or Glu-tRNA(Gln) in organisms which lack either or both of asparaginyl-tRNA or glutaminyl-tRNA synthetases. The reaction takes place in the presence of glutamine and ATP through an activated phospho-Asp-tRNA(Asn) or phospho-Glu-tRNA(Gln). This is Aspartyl/glutamyl-tRNA(Asn/Gln) amidotransferase subunit C from Clostridium botulinum (strain 657 / Type Ba4).